A 190-amino-acid chain; its full sequence is Lipid A acyltransferase PagP (190 aa).

The N-terminal stretch at 1 to 29 (MYVAMIIRKYFLIIALLLMPWLAIPSVSA) is a signal peptide. Catalysis depends on residues histidine 62, aspartate 105, and serine 106.

It belongs to the lipid A palmitoyltransferase family. Homodimer.

The protein localises to the cell outer membrane. It catalyses the reaction a lipid A + a 1,2-diacyl-sn-glycero-3-phosphocholine = a hepta-acyl lipid A + a 2-acyl-sn-glycero-3-phosphocholine. The catalysed reaction is a lipid IVA + a 1,2-diacyl-sn-glycero-3-phosphocholine = a lipid IVB + a 2-acyl-sn-glycero-3-phosphocholine. It carries out the reaction a lipid IIA + a 1,2-diacyl-sn-glycero-3-phosphocholine = a lipid IIB + a 2-acyl-sn-glycero-3-phosphocholine. Functionally, transfers a fatty acid residue from the sn-1 position of a phospholipid to the N-linked hydroxyfatty acid chain on the proximal unit of lipid A or its precursors. Required for resistance to cationic antimicrobial peptides (CAMPs). Modifications of lipid A with an acyl chain allow to evade host immune defenses by resisting antimicrobial peptides and attenuating the inflammatory response to infection triggered by lipopolysaccharide through the Toll-like receptor 4 (TLR4) signal transduction pathway. In Salmonella typhimurium (strain LT2 / SGSC1412 / ATCC 700720), this protein is Lipid A acyltransferase PagP.